Consider the following 94-residue polypeptide: Small ribosomal subunit protein uS19 (94 aa).

This sequence belongs to the universal ribosomal protein uS19 family.

Protein S19 forms a complex with S13 that binds strongly to the 16S ribosomal RNA. The polypeptide is Small ribosomal subunit protein uS19 (Clostridium novyi (strain NT)).